A 156-amino-acid polypeptide reads, in one-letter code: Single-stranded DNA-binding protein 1 (156 aa).

Residues Met-1–Glu-104 form the SSB domain. The interval Gln-122–Pro-146 is disordered.

As to quaternary structure, homotetramer.

The polypeptide is Single-stranded DNA-binding protein 1 (ssb1) (Staphylococcus aureus (strain MSSA476)).